The chain runs to 133 residues: Small ribosomal subunit protein uS8 (133 aa).

The protein belongs to the universal ribosomal protein uS8 family. Part of the 30S ribosomal subunit.

Functionally, one of the primary rRNA binding proteins, it binds directly to 16S rRNA central domain where it helps coordinate assembly of the platform of the 30S subunit. This is Small ribosomal subunit protein uS8 from Saccharolobus solfataricus (strain ATCC 35092 / DSM 1617 / JCM 11322 / P2) (Sulfolobus solfataricus).